The chain runs to 334 residues: Phosphoribosylformylglycinamidine cyclo-ligase (334 aa).

Belongs to the AIR synthase family.

It localises to the cytoplasm. It carries out the reaction 2-formamido-N(1)-(5-O-phospho-beta-D-ribosyl)acetamidine + ATP = 5-amino-1-(5-phospho-beta-D-ribosyl)imidazole + ADP + phosphate + H(+). Its pathway is purine metabolism; IMP biosynthesis via de novo pathway; 5-amino-1-(5-phospho-D-ribosyl)imidazole from N(2)-formyl-N(1)-(5-phospho-D-ribosyl)glycinamide: step 2/2. This Pyrococcus furiosus (strain ATCC 43587 / DSM 3638 / JCM 8422 / Vc1) protein is Phosphoribosylformylglycinamidine cyclo-ligase.